A 1066-amino-acid chain; its full sequence is Probable sucrose-phosphate synthase 4 (1066 aa).

2 disordered regions span residues 132–166 (YAAA…GRMP) and 688–714 (PRHP…SLRD). A compositionally biased stretch (basic and acidic residues) spans 143-162 (EGEKGENINESSSTHDESTR).

It belongs to the glycosyltransferase 1 family. As to quaternary structure, homodimer or homotetramer. As to expression, expressed in germinating seeds.

It catalyses the reaction beta-D-fructose 6-phosphate + UDP-alpha-D-glucose = sucrose 6(F)-phosphate + UDP + H(+). The protein operates within glycan biosynthesis; sucrose biosynthesis; sucrose from D-fructose 6-phosphate and UDP-alpha-D-glucose: step 1/2. Its activity is regulated as follows. Activity is regulated by phosphorylation and moderated by concentration of metabolites and light. In terms of biological role, plays a role in photosynthetic sucrose synthesis by catalyzing the rate-limiting step of sucrose biosynthesis from UDP-glucose and fructose- 6-phosphate. Involved in the regulation of carbon partitioning in the leaves of plants. May regulate the synthesis of sucrose and therefore play a major role as a limiting factor in the export of photoassimilates out of the leaf. Plays a role for sucrose availability that is essential for plant growth and fiber elongation. This chain is Probable sucrose-phosphate synthase 4 (SPS4), found in Oryza sativa subsp. japonica (Rice).